The primary structure comprises 173 residues: Superoxide dismutase [Cu-Zn] (173 aa).

The first 19 residues, 1 to 19 (MKSLFIASTMVLMAFPAFA), serve as a signal peptide directing secretion. Positions 67, 69, and 92 each coordinate Cu cation. Cys-74 and Cys-169 form a disulfide bridge. Residues His-92, His-101, His-109, and Asp-112 each contribute to the Zn(2+) site. Residue His-147 participates in Cu cation binding.

It belongs to the Cu-Zn superoxide dismutase family. Homodimer. Requires Cu cation as cofactor. It depends on Zn(2+) as a cofactor.

The protein localises to the periplasm. It carries out the reaction 2 superoxide + 2 H(+) = H2O2 + O2. Functionally, destroys radicals which are normally produced within the cells and which are toxic to biological systems. This Brucella abortus biovar 1 (strain 9-941) protein is Superoxide dismutase [Cu-Zn] (sodC).